The chain runs to 192 residues: Protein GrpE (192 aa).

The tract at residues 1–43 (MQENKQPSEIQGELPQPPDGESVPPQPTNEQAPPDTDTMPRIE) is disordered.

This sequence belongs to the GrpE family. As to quaternary structure, homodimer.

It is found in the cytoplasm. Functionally, participates actively in the response to hyperosmotic and heat shock by preventing the aggregation of stress-denatured proteins, in association with DnaK and GrpE. It is the nucleotide exchange factor for DnaK and may function as a thermosensor. Unfolded proteins bind initially to DnaJ; upon interaction with the DnaJ-bound protein, DnaK hydrolyzes its bound ATP, resulting in the formation of a stable complex. GrpE releases ADP from DnaK; ATP binding to DnaK triggers the release of the substrate protein, thus completing the reaction cycle. Several rounds of ATP-dependent interactions between DnaJ, DnaK and GrpE are required for fully efficient folding. This is Protein GrpE from Aromatoleum aromaticum (strain DSM 19018 / LMG 30748 / EbN1) (Azoarcus sp. (strain EbN1)).